The following is a 429-amino-acid chain: Serine--tRNA ligase (429 aa).

236-238 (TAE) is a binding site for L-serine. Residue 267–269 (RRE) coordinates ATP. Position 290 (glutamate 290) interacts with L-serine. 354–357 (EISS) is an ATP binding site. Position 390 (serine 390) interacts with L-serine.

This sequence belongs to the class-II aminoacyl-tRNA synthetase family. Type-1 seryl-tRNA synthetase subfamily. In terms of assembly, homodimer. The tRNA molecule binds across the dimer.

It localises to the cytoplasm. It catalyses the reaction tRNA(Ser) + L-serine + ATP = L-seryl-tRNA(Ser) + AMP + diphosphate + H(+). The catalysed reaction is tRNA(Sec) + L-serine + ATP = L-seryl-tRNA(Sec) + AMP + diphosphate + H(+). The protein operates within aminoacyl-tRNA biosynthesis; selenocysteinyl-tRNA(Sec) biosynthesis; L-seryl-tRNA(Sec) from L-serine and tRNA(Sec): step 1/1. Functionally, catalyzes the attachment of serine to tRNA(Ser). Is also able to aminoacylate tRNA(Sec) with serine, to form the misacylated tRNA L-seryl-tRNA(Sec), which will be further converted into selenocysteinyl-tRNA(Sec). The chain is Serine--tRNA ligase from Gloeobacter violaceus (strain ATCC 29082 / PCC 7421).